Here is a 260-residue protein sequence, read N- to C-terminus: Adenosylcobinamide-GDP ribazoletransferase (260 aa).

Transmembrane regions (helical) follow at residues 31-51, 55-75, 111-131, 140-160, 177-197, 202-222, and 234-254; these read IIFF…LVNI, IFSS…VRGI, VIGV…FAFV, FLIF…LMYY, ISSW…VYFT, FIFL…LKKF, and HLGA…LLGE.

The protein belongs to the CobS family. The cofactor is Mg(2+).

It localises to the cell inner membrane. The catalysed reaction is alpha-ribazole + adenosylcob(III)inamide-GDP = adenosylcob(III)alamin + GMP + H(+). It catalyses the reaction alpha-ribazole 5'-phosphate + adenosylcob(III)inamide-GDP = adenosylcob(III)alamin 5'-phosphate + GMP + H(+). Its pathway is cofactor biosynthesis; adenosylcobalamin biosynthesis; adenosylcobalamin from cob(II)yrinate a,c-diamide: step 7/7. In terms of biological role, joins adenosylcobinamide-GDP and alpha-ribazole to generate adenosylcobalamin (Ado-cobalamin). Also synthesizes adenosylcobalamin 5'-phosphate from adenosylcobinamide-GDP and alpha-ribazole 5'-phosphate. The protein is Adenosylcobinamide-GDP ribazoletransferase of Thermodesulfovibrio yellowstonii (strain ATCC 51303 / DSM 11347 / YP87).